The sequence spans 505 residues: MDLLLLEKSLIAVFVAVILATVISKLRGKKLKLPPGPIPIPIFGNWLQVGDDLNHRNLVDYAKKFGDLFLLRMGQRNLVVVSSPDLTKEVLLTQGVEFGSRTRNVVFDIFTGKGQDMVFTVYGEHWRKMRRIMTVPFFTNKVVQQNREGWEFEAASVVEDVKKNPDSATKGIVLRKRLQLMMYNNMFRIMFDRRFESEDDPLFLRLKALNGERSRLAQSFEYNYGDFIPILRPFLRGYLKICQDVKDRRIALFKKYFVDERKQIASSKPTGSEGLKCAIDHILEAEQKGEINEDNVLYIVENINVAAIETTLWSIEWGIAELVNHPEIQSKLRNELDTVLGPGVQVTEPDLHKLPYLQAVVKETLRLRMAIPLLVPHMNLHDAKLAGYDIPAESKILVNAWWLANNPNSWKKPEEFRPERFFEEESHVEANGNDFRYVPFGVGRRSCPGIILALPILGITIGRMVQNFELLPPPGQSKVDTSEKGGQFSLHILNHSIIVMKPRNC.

The helical transmembrane segment at 3 to 23 (LLLLEKSLIAVFVAVILATVI) threads the bilayer. (E)-cinnamate contacts are provided by residues 213–218 (RSRLAQ) and A306. A heme-binding site is contributed by C447.

This sequence belongs to the cytochrome P450 family. It depends on heme as a cofactor. As to expression, expressed in roots, leaves, stems, flowers and siliques.

It is found in the membrane. It catalyses the reaction (E)-cinnamate + reduced [NADPH--hemoprotein reductase] + O2 = (E)-4-coumarate + oxidized [NADPH--hemoprotein reductase] + H2O + H(+). The protein operates within phenylpropanoid metabolism; trans-4-coumarate biosynthesis; trans-4-coumarate from trans-cinnamate: step 1/1. In terms of biological role, catalyzes the first oxidative step of the phenylpropanoid pathway in higher plants by transforming trans-cinnamate into p-coumarate. The compounds formed by this pathway are essential components for lignification, pollination, and defense against ultraviolet light, predators and pathogens. The polypeptide is Trans-cinnamate 4-monooxygenase (Arabidopsis thaliana (Mouse-ear cress)).